We begin with the raw amino-acid sequence, 154 residues long: Myoglobin (154 aa).

Residues 2–148 (GLSDGEWTLV…FRNDMAAQYK (147 aa)) enclose the Globin domain. Ser-4 bears the Phosphoserine mark. A nitrite-binding site is contributed by His-65. His-65 serves as a coordination point for O2. Thr-68 carries the post-translational modification Phosphothreonine. His-94 is a binding site for heme b.

This sequence belongs to the globin family. As to quaternary structure, monomeric.

The protein localises to the cytoplasm. Its subcellular location is the sarcoplasm. The catalysed reaction is Fe(III)-heme b-[protein] + nitric oxide + H2O = Fe(II)-heme b-[protein] + nitrite + 2 H(+). It catalyses the reaction H2O2 + AH2 = A + 2 H2O. Monomeric heme protein which primary function is to store oxygen and facilitate its diffusion within muscle tissues. Reversibly binds oxygen through a pentacoordinated heme iron and enables its timely and efficient release as needed during periods of heightened demand. Depending on the oxidative conditions of tissues and cells, and in addition to its ability to bind oxygen, it also has a nitrite reductase activity whereby it regulates the production of bioactive nitric oxide. Under stress conditions, like hypoxia and anoxia, it also protects cells against reactive oxygen species thanks to its pseudoperoxidase activity. The sequence is that of Myoglobin from Capra hircus (Goat).